Reading from the N-terminus, the 231-residue chain is Cytochrome c oxidase assembly factor 7 (231 aa).

Sel1-like repeat units lie at residues Pro34 to Glu66, Ser68 to Gly104, Ile108 to Phe145, Ala146 to His182, and Met183 to Arg218.

This sequence belongs to the hcp beta-lactamase family.

Its subcellular location is the mitochondrion intermembrane space. May be required for assembly of mitochondrial respiratory chain complexes. The protein is Cytochrome c oxidase assembly factor 7 (coa7) of Xenopus tropicalis (Western clawed frog).